The chain runs to 417 residues: Brevican core protein (417 aa).

The first 22 residues, 1–22 (MAPLFLPLLIALALAPGPTASA), serve as a signal peptide directing secretion. The Ig-like V-type domain maps to 23–155 (DVLEGDSSED…SSDAVEVKVK (133 aa)). 3 cysteine pairs are disulfide-bonded: C57-C137, C179-C250, and C203-C224. The N-linked (GlcNAc...) asparagine glycan is linked to N130. 2 Link domains span residues 157–252 (VVFL…YCYA) and 257–354 (GELF…YCFR). Residue N267 is glycosylated (N-linked (GlcNAc...) asparagine). 2 disulfide bridges follow: C277-C352 and C301-C322. Residue N337 is glycosylated (N-linked (GlcNAc...) asparagine).

This sequence belongs to the aggrecan/versican proteoglycan family. As to expression, central nervous system.

It localises to the secreted. The protein localises to the extracellular space. The protein resides in the extracellular matrix. In terms of biological role, may play a role in the terminally differentiating and the adult nervous system during postnatal development. Could stabilize interactions between hyaluronan (HA) and brain proteoglycans. This chain is Brevican core protein (BCAN), found in Felis catus (Cat).